We begin with the raw amino-acid sequence, 234 residues long: Sugar fermentation stimulation protein homolog (234 aa).

Belongs to the SfsA family.

The chain is Sugar fermentation stimulation protein homolog from Shewanella halifaxensis (strain HAW-EB4).